The following is a 344-amino-acid chain: Ferrochelatase (344 aa).

Fe cation-binding residues include His211 and Glu292.

It belongs to the ferrochelatase family.

The protein localises to the cytoplasm. It carries out the reaction heme b + 2 H(+) = protoporphyrin IX + Fe(2+). It participates in porphyrin-containing compound metabolism; protoheme biosynthesis; protoheme from protoporphyrin-IX: step 1/1. Its function is as follows. Catalyzes the ferrous insertion into protoporphyrin IX. The protein is Ferrochelatase of Methylobacillus flagellatus (strain ATCC 51484 / DSM 6875 / VKM B-1610 / KT).